The sequence spans 395 residues: Small RNA 2'-O-methyltransferase (395 aa).

Positions 79 and 115 each coordinate S-adenosyl-L-methionine. Residues glutamate 133, glutamate 136, histidine 137, and histidine 182 each coordinate Mg(2+).

Belongs to the methyltransferase superfamily. HEN1 family. Requires Mg(2+) as cofactor. As to expression, specifically expressed in testis.

It is found in the cytoplasm. The catalysed reaction is small RNA 3'-end nucleotide + S-adenosyl-L-methionine = small RNA 3'-end 2'-O-methylnucleotide + S-adenosyl-L-homocysteine + H(+). Methyltransferase that adds a 2'-O-methyl group at the 3'-end of piRNAs, a class of 24 to 30 nucleotide RNAs that are generated by a Dicer-independent mechanism and are primarily derived from transposons and other repeated sequence elements. This probably protects the 3'-end of piRNAs from uridylation activity and subsequent degradation. Stabilization of piRNAs is essential for gametogenesis. This Mus musculus (Mouse) protein is Small RNA 2'-O-methyltransferase (Henmt1).